The chain runs to 236 residues: 15,16-dihydrobiliverdin:ferredoxin oxidoreductase (236 aa).

The protein belongs to the HY2 family.

It catalyses the reaction 15,16-dihydrobiliverdin + oxidized 2[4Fe-4S]-[ferredoxin] = biliverdin IXalpha + reduced 2[4Fe-4S]-[ferredoxin] + 2 H(+). Its function is as follows. Catalyzes the two-electron reduction of biliverdin IX-alpha at the C15 methine bridge. The sequence is that of 15,16-dihydrobiliverdin:ferredoxin oxidoreductase from Prochlorococcus marinus (strain MIT 9515).